The sequence spans 137 residues: Large ribosomal subunit protein uL16 (137 aa).

This sequence belongs to the universal ribosomal protein uL16 family. As to quaternary structure, part of the 50S ribosomal subunit.

In terms of biological role, binds 23S rRNA and is also seen to make contacts with the A and possibly P site tRNAs. The protein is Large ribosomal subunit protein uL16 of Psychrobacter cryohalolentis (strain ATCC BAA-1226 / DSM 17306 / VKM B-2378 / K5).